Here is a 252-residue protein sequence, read N- to C-terminus: Imidazole glycerol phosphate synthase subunit HisF (252 aa).

Residues Asp-11 and Asp-130 contribute to the active site.

This sequence belongs to the HisA/HisF family. In terms of assembly, heterodimer of HisH and HisF.

The protein localises to the cytoplasm. It carries out the reaction 5-[(5-phospho-1-deoxy-D-ribulos-1-ylimino)methylamino]-1-(5-phospho-beta-D-ribosyl)imidazole-4-carboxamide + L-glutamine = D-erythro-1-(imidazol-4-yl)glycerol 3-phosphate + 5-amino-1-(5-phospho-beta-D-ribosyl)imidazole-4-carboxamide + L-glutamate + H(+). The protein operates within amino-acid biosynthesis; L-histidine biosynthesis; L-histidine from 5-phospho-alpha-D-ribose 1-diphosphate: step 5/9. IGPS catalyzes the conversion of PRFAR and glutamine to IGP, AICAR and glutamate. The HisF subunit catalyzes the cyclization activity that produces IGP and AICAR from PRFAR using the ammonia provided by the HisH subunit. This is Imidazole glycerol phosphate synthase subunit HisF from Dictyoglomus thermophilum (strain ATCC 35947 / DSM 3960 / H-6-12).